Here is a 165-residue protein sequence, read N- to C-terminus: 3-hydroxyacyl-[acyl-carrier-protein] dehydratase FabZ (165 aa).

His64 is an active-site residue.

Belongs to the thioester dehydratase family. FabZ subfamily.

It is found in the cytoplasm. It catalyses the reaction a (3R)-hydroxyacyl-[ACP] = a (2E)-enoyl-[ACP] + H2O. In terms of biological role, involved in unsaturated fatty acids biosynthesis. Catalyzes the dehydration of short chain beta-hydroxyacyl-ACPs and long chain saturated and unsaturated beta-hydroxyacyl-ACPs. This chain is 3-hydroxyacyl-[acyl-carrier-protein] dehydratase FabZ, found in Acidiphilium cryptum (strain JF-5).